A 215-amino-acid chain; its full sequence is Ribosomal RNA small subunit methyltransferase G (215 aa).

S-adenosyl-L-methionine contacts are provided by residues Gly78, Leu83, 128 to 129 (AE), and Arg146.

This sequence belongs to the methyltransferase superfamily. RNA methyltransferase RsmG family.

It is found in the cytoplasm. It catalyses the reaction guanosine(527) in 16S rRNA + S-adenosyl-L-methionine = N(7)-methylguanosine(527) in 16S rRNA + S-adenosyl-L-homocysteine. Functionally, specifically methylates the N7 position of guanine in position 527 of 16S rRNA. The sequence is that of Ribosomal RNA small subunit methyltransferase G from Anaeromyxobacter dehalogenans (strain 2CP-C).